Here is a 400-residue protein sequence, read N- to C-terminus: MIIKPKIRGFICTTTHPVGCEANVKEQIELIKAKGKIANGPKKVLVVGSSSGYGLSSRITSAFGSDAATIGVFFEKPSSETKPGTAGWYNTAAFDKFAKAEGLYSKSINCDAFSHQAKQQVIELIKQDLGQIDMVVYSLASPVRKMPDTGEVIRSSLKPIGQTYTATAVDTNKNTIIDTSVEPATEQEIADTVTVMGGQDWELWMSALSEAGVLADNCKTVAYSYIGTELTWPIYWHGALGKAKMDLDRAAHALDSKLFATGGSANVAVLKSVVTQASSAIPVMPLYIAMVFKKMRQEGLHEGCIEQIYRLFSERLYRVDGQAPAVDSENRLRLDDWELREEIQQHCRDLWPLVTTENLSELTDYNEYKEEFLKLFGFGIDGIDYEAEVDPNVTFDVIEL.

NAD(+) contacts are provided by residues 48 to 53 (GSSSGY), 74 to 75 (FE), 111 to 112 (DA), and 139 to 140 (LA). Tyrosine 225 contacts substrate. The active-site Proton donor is tyrosine 235. Residues lysine 244 and 273–275 (VVT) contribute to the NAD(+) site.

This sequence belongs to the TER reductase family. As to quaternary structure, monomer.

The catalysed reaction is a 2,3-saturated acyl-[ACP] + NAD(+) = a (2E)-enoyl-[ACP] + NADH + H(+). It functions in the pathway lipid metabolism; fatty acid biosynthesis. Involved in the final reduction of the elongation cycle of fatty acid synthesis (FAS II). Catalyzes the reduction of a carbon-carbon double bond in an enoyl moiety that is covalently linked to an acyl carrier protein (ACP). In Shewanella frigidimarina (strain NCIMB 400), this protein is Enoyl-[acyl-carrier-protein] reductase [NADH].